The primary structure comprises 629 residues: Probable alpha-L-arabinofuranosidase A (629 aa).

The first 25 residues, M1–G25, serve as a signal peptide directing secretion. 9 N-linked (GlcNAc...) asparagine glycosylation sites follow: N36, N51, N140, N152, N168, N171, N260, N494, and N534.

Belongs to the glycosyl hydrolase 51 family.

The protein localises to the secreted. The catalysed reaction is Hydrolysis of terminal non-reducing alpha-L-arabinofuranoside residues in alpha-L-arabinosides.. The protein operates within glycan metabolism; L-arabinan degradation. Functionally, alpha-L-arabinofuranosidase involved in the degradation of arabinoxylan, a major component of plant hemicellulose. Acts only on small linear 1,5-alpha-linked L-arabinofuranosyl oligosaccharides. The polypeptide is Probable alpha-L-arabinofuranosidase A (abfA) (Aspergillus flavus (strain ATCC 200026 / FGSC A1120 / IAM 13836 / NRRL 3357 / JCM 12722 / SRRC 167)).